Consider the following 64-residue polypeptide: DNA gyrase inhibitor YacG (64 aa).

Zn(2+) is bound by residues cysteine 9, cysteine 12, cysteine 28, and cysteine 32. Residues 45–64 (KRIPSAGDLSDSDDWSEQQP) form a disordered region. Positions 54–64 (SDSDDWSEQQP) are enriched in acidic residues.

Belongs to the DNA gyrase inhibitor YacG family. As to quaternary structure, interacts with GyrB. Zn(2+) is required as a cofactor.

In terms of biological role, inhibits all the catalytic activities of DNA gyrase by preventing its interaction with DNA. Acts by binding directly to the C-terminal domain of GyrB, which probably disrupts DNA binding by the gyrase. The chain is DNA gyrase inhibitor YacG from Klebsiella pneumoniae subsp. pneumoniae (strain ATCC 700721 / MGH 78578).